Here is a 398-residue protein sequence, read N- to C-terminus: GTP cyclohydrolase-2 (398 aa).

The unknown stretch occupies residues 1–172 (MNTPTHTHPH…TAAACASTTE (172 aa)). Positions 173–398 (YELVTRTPVP…VKPIAKTGHA (226 aa)) are GTP cyclohydrolase II. 220–224 (RVHSS) contacts GTP. Zn(2+) contacts are provided by Cys-225, Cys-236, and Cys-238. GTP-binding positions include Gln-241, 263-265 (EGR), and Thr-285. Catalysis depends on Asp-297, which acts as the Proton acceptor. Residue Arg-299 is the Nucleophile of the active site. Positions 320 and 325 each coordinate GTP. The segment at 375–398 (QRPQDPSETVDGETVKPIAKTGHA) is disordered.

The protein in the C-terminal section; belongs to the GTP cyclohydrolase II family. Requires Zn(2+) as cofactor.

It catalyses the reaction GTP + 4 H2O = 2,5-diamino-6-hydroxy-4-(5-phosphoribosylamino)-pyrimidine + formate + 2 phosphate + 3 H(+). It participates in cofactor biosynthesis; riboflavin biosynthesis; 5-amino-6-(D-ribitylamino)uracil from GTP: step 1/4. Functionally, catalyzes the conversion of GTP to 2,5-diamino-6-ribosylamino-4(3H)-pyrimidinone 5'-phosphate (DARP), formate and pyrophosphate. In Xylella fastidiosa (strain Temecula1 / ATCC 700964), this protein is GTP cyclohydrolase-2 (ribA).